Consider the following 404-residue polypeptide: Cysteine desulfurase IscS (404 aa).

Pyridoxal 5'-phosphate is bound by residues 75–76 (AT), asparagine 155, glutamine 183, and 203–205 (SAH). At lysine 206 the chain carries N6-(pyridoxal phosphate)lysine. Threonine 243 lines the pyridoxal 5'-phosphate pocket. Residue cysteine 328 is the Cysteine persulfide intermediate of the active site. Cysteine 328 is a binding site for [2Fe-2S] cluster.

The protein belongs to the class-V pyridoxal-phosphate-dependent aminotransferase family. NifS/IscS subfamily. Homodimer. Forms a heterotetramer with IscU, interacts with other sulfur acceptors. Pyridoxal 5'-phosphate serves as cofactor.

It is found in the cytoplasm. The enzyme catalyses (sulfur carrier)-H + L-cysteine = (sulfur carrier)-SH + L-alanine. It functions in the pathway cofactor biosynthesis; iron-sulfur cluster biosynthesis. Its function is as follows. Master enzyme that delivers sulfur to a number of partners involved in Fe-S cluster assembly, tRNA modification or cofactor biosynthesis. Catalyzes the removal of elemental sulfur atoms from cysteine to produce alanine. Functions as a sulfur delivery protein for Fe-S cluster synthesis onto IscU, an Fe-S scaffold assembly protein, as well as other S acceptor proteins. The protein is Cysteine desulfurase IscS of Photorhabdus laumondii subsp. laumondii (strain DSM 15139 / CIP 105565 / TT01) (Photorhabdus luminescens subsp. laumondii).